The sequence spans 248 residues: Triosephosphate isomerase (248 aa).

9-11 (NWK) lines the substrate pocket. The active-site Electrophile is His-94. The Proton acceptor role is filled by Glu-166. Residues Gly-172, Ser-212, and 233–234 (GG) each bind substrate.

The protein belongs to the triosephosphate isomerase family. As to quaternary structure, homodimer.

It localises to the cytoplasm. The catalysed reaction is D-glyceraldehyde 3-phosphate = dihydroxyacetone phosphate. It functions in the pathway carbohydrate biosynthesis; gluconeogenesis. Its pathway is carbohydrate degradation; glycolysis; D-glyceraldehyde 3-phosphate from glycerone phosphate: step 1/1. In terms of biological role, involved in the gluconeogenesis. Catalyzes stereospecifically the conversion of dihydroxyacetone phosphate (DHAP) to D-glyceraldehyde-3-phosphate (G3P). This Clostridium botulinum (strain Eklund 17B / Type B) protein is Triosephosphate isomerase.